The following is a 188-amino-acid chain: Molybdopterin synthase catalytic subunit (188 aa).

A compositionally biased stretch (low complexity) spans 1–14; that stretch reads MTTQPPQDQTSTTP. Positions 1–23 are disordered; that stretch reads MTTQPPQDQTSTTPSLPPHLDPT. Substrate contacts are provided by residues 134–135, lysine 150, and 157–159; these read HR and KRE.

This sequence belongs to the MoaE family. MOCS2B subfamily. As to quaternary structure, heterotetramer; composed of 2 small (MOCS2A) and 2 large (MOCS2B) subunits.

Its subcellular location is the cytoplasm. The catalysed reaction is 2 [molybdopterin-synthase sulfur-carrier protein]-C-terminal-Gly-aminoethanethioate + cyclic pyranopterin phosphate + H2O = molybdopterin + 2 [molybdopterin-synthase sulfur-carrier protein]-C-terminal Gly-Gly + 2 H(+). It participates in cofactor biosynthesis; molybdopterin biosynthesis. Catalytic subunit of the molybdopterin synthase complex, a complex that catalyzes the conversion of precursor Z into molybdopterin. Acts by mediating the incorporation of 2 sulfur atoms from thiocarboxylated MOCS2A into precursor Z to generate a dithiolene group. This is Molybdopterin synthase catalytic subunit from Neosartorya fischeri (strain ATCC 1020 / DSM 3700 / CBS 544.65 / FGSC A1164 / JCM 1740 / NRRL 181 / WB 181) (Aspergillus fischerianus).